Consider the following 818-residue polypeptide: Protein TOC75-3, chloroplastic (818 aa).

Residues 1 to 79 (MAAFSVNGQL…LKNLAKPLAV (79 aa)) constitute a chloroplast transit peptide. Over residues 15 to 41 (TSSTASTSLSSRRKFLSPSSSRLPRIS) the composition is skewed to low complexity. A disordered region spans residues 15–67 (TSSTASTSLSSRRKFLSPSSSRLPRISTQSPRVPSIKCSKSLPNRDTETSSKD). The segment covering 57-67 (PNRDTETSSKD) has biased composition (basic and acidic residues). Residues 80–140 (ASVSSAASFF…KLFSPSPAVA (61 aa)) constitute a chloroplast; outer membrane transit peptide. 3 consecutive POTRA domains span residues 141 to 246 (DEEQ…FAES), 247 to 364 (TWQS…VVEG), and 365 to 448 (DITQ…LKEL). Topologically, residues 141–473 (DEEQSPDWDS…GRGGAPTLAS (333 aa)) are chloroplast intermembrane. A beta stranded membrane pass occupies residues 474 to 482 (FQPGGSVTF). Over 483 to 509 (EHRNLQGLNRSLMGSVTTSNFLNPQDD) the chain is Cytoplasmic. The beta stranded transmembrane segment at 510–518 (LSFKLEYVH) threads the bilayer. The Chloroplast intermembrane segment spans residues 519–562 (PYLDGVYNPRNRTFKTSCFNSRKLSPVFTGGPGVEEVPPIWVDR). Residues 563-570 (AGVKANIT) traverse the membrane as a beta stranded segment. The Cytoplasmic segment spans residues 571–578 (ENFTRQSK). A beta stranded transmembrane segment spans residues 579–586 (FTYGLVME). Topologically, residues 587–693 (EITTRDESSH…VEQGAGKSPP (107 aa)) are chloroplast intermembrane. A beta stranded membrane pass occupies residues 694–702 (PVLVLHGHY). Residues 703-714 (GGCVGDLPSYDA) lie on the Cytoplasmic side of the membrane. Residues 715–723 (FVLGGPYSV) form a beta stranded membrane-spanning segment. Residues 724 to 785 (RGYNMGELGA…VYRRTGQGSS (62 aa)) are Chloroplast intermembrane-facing. A beta stranded membrane pass occupies residues 786 to 792 (YGAGVKL). Over 793 to 806 (GLVRAEYAVDHNNG) the chain is Cytoplasmic. A beta stranded membrane pass occupies residues 807–814 (TGALFFRF). Residues 815–818 (GERY) are Chloroplast intermembrane-facing.

It belongs to the TOC75 family. In terms of assembly, part of the TOC core complex that includes a protein for the specific recognition of transit peptides surrounded by a ring composed of four proteins forming translocation channels, and four to five GTP-binding proteins providing energy. This core complex can interact with components of the TIC complex to form a larger import complex. Chloroplastic protein precursors such as prSS (precursor of the RuBisCO small subunit) also interact with these complexes. The TOC complex contains a specific subset of polar lipids such as digalactosyldiacylglyceride (DGDG), phosphatidylcholine (PC) and phosphatidylglycerol (PG). TOC75-3 interacts with TOC34/OEP34, TOC159/TOC86, TOC132 and TOC120. Interacts with SP1. Interacts with TIC236. In terms of tissue distribution, mostly expressed in young and actively dividing photosynthetic tissues and, to a lower extent, in old leaves and roots. Particularly low levels in leaves after etiolation.

It is found in the plastid. The protein resides in the chloroplast outer membrane. Essential protein. Mediates the insertion of proteins targeted to the outer membrane of chloroplasts. Required for the import of protein precursors into chloroplasts. Forms the voltage-dependent preprotein translocation channels (hydrophilic beta barrel) of the TOC complex in the chloroplastic outer membrane. In Arabidopsis thaliana (Mouse-ear cress), this protein is Protein TOC75-3, chloroplastic.